We begin with the raw amino-acid sequence, 365 residues long: UPF0283 membrane protein Avi_2471 (365 aa).

The segment covering 1–10 (MSKAPEDQRP) has biased composition (basic and acidic residues). The segment at 1-47 (MSKAPEDQRPMPRRPAAFSLEEPSSSPARPPFAEAQEPQRRAPKSFD) is disordered. The next 2 membrane-spanning stretches (helical) occupy residues 83 to 103 (FGKL…GLWI) and 117 to 137 (LGYT…VVVI).

It belongs to the UPF0283 family.

The protein resides in the cell inner membrane. The chain is UPF0283 membrane protein Avi_2471 from Allorhizobium ampelinum (strain ATCC BAA-846 / DSM 112012 / S4) (Agrobacterium vitis (strain S4)).